We begin with the raw amino-acid sequence, 149 residues long: Deoxyuridine 5'-triphosphate nucleotidohydrolase (149 aa).

Substrate contacts are provided by residues 68-70 (RSG), N81, 85-87 (LID), and M95.

Belongs to the dUTPase family. Mg(2+) serves as cofactor.

The catalysed reaction is dUTP + H2O = dUMP + diphosphate + H(+). It participates in pyrimidine metabolism; dUMP biosynthesis; dUMP from dCTP (dUTP route): step 2/2. In terms of biological role, this enzyme is involved in nucleotide metabolism: it produces dUMP, the immediate precursor of thymidine nucleotides and it decreases the intracellular concentration of dUTP so that uracil cannot be incorporated into DNA. The polypeptide is Deoxyuridine 5'-triphosphate nucleotidohydrolase (Methylibium petroleiphilum (strain ATCC BAA-1232 / LMG 22953 / PM1)).